Consider the following 1307-residue polypeptide: CRISPR-associated endonuclease Cas12a (1307 aa).

The WED-I (OBD-I) stretch occupies residues 1 to 35 (MTQFEGFTNLYQVSKTLRFELIPQGKTLKHIQEQG). The REC1 (helical-I) stretch occupies residues 36 to 320 (FIEEDKARND…SDRNTLSFIL (285 aa)). Position 47–51 (47–51 (YKELK)) interacts with crRNA. Residues 74–106 (ENLSAAIDSYRKEKTEETRNALIEEQATYRNAI) adopt a coiled-coil conformation. CrRNA contacts are provided by residues 175–176 (NR) and 307–310 (KQIL). The interval 321 to 526 (EEFKSDEEVI…ARNYATKKPY (206 aa)) is WED-II (helical-II). The segment at 527-598 (SVEKFKLNFQ…GFDKMYYDYF (72 aa)) is WED-II (OBD-I). Positions 599–607 (PDAAKMIPK) form a DNA-binding region, PAM-binding on target DNA. The tract at residues 599 to 718 (PDAAKMIPKC…EYYAELNPLL (120 aa)) is PI (LHD). The interval 719–884 (YHISFQRIAE…ITLNYQAANS (166 aa)) is WED-III (OBD-III). A crRNA-binding site is contributed by 752 to 761 (KGHHGKPNLH). The segment at residues 780-783 (KLNG) is a DNA-binding region (target DNA). H800 acts as the For pre-crRNA processing in catalysis. Residue 806-808 (MLN) coordinates crRNA. Catalysis depends on for pre-crRNA processing residues K809 and K860. The interval 885-940 (PSKFNQRVNAYLKEHPETPIIGIDRGERNLIYITVIDSTGKILEQRSLNTIQQFDY) is ruvC-I. Catalysis depends on D908, which acts as the For DNase activity of RuvC domain. Residues 941-957 (QKKLDNREKERVAARQA) are bridge helix. The target DNA DNA-binding region spans 951 to 968 (RVAARQAWSVVGTIKDLK). The tract at residues 958–1066 (WSVVGTIKDL…TQSGFLFYVP (109 aa)) is ruvC-II. The active-site For DNase activity of RuvC domain is the E993. The target DNA DNA-binding region spans 1051–1053 (SFA). The interval 1067-1262 (APYTSKIDPL…FQNPEWPMDA (196 aa)) is nuclease domain. Residue R1226 is the For DNase activity of nuclease domain of the active site. D1263 serves as the catalytic For DNase activity of RuvC domain. The interval 1263–1307 (DANGAYHIALKGQLLLNHLKESKDLKLQNGISNQDWLAYIQELRN) is ruvC-III.

This sequence belongs to the CRISPR-associated endonuclease Cas12a family. In terms of assembly, monomer. Requires Mg(2+) as cofactor.

It catalyses the reaction Endonucleolytic cleavage to 5'-phosphodinucleotide and 5'-phosphooligonucleotide end-products.. The enzyme catalyses RNA = a 5'-hydroxy-ribonucleotide + n nucleoside-2',3'-cyclophosphates.. CRISPR (clustered regularly interspaced short palindromic repeat), is an adaptive immune system that provides protection against mobile genetic elements (viruses, transposable elements and conjugative plasmids). CRISPR clusters contain sequences complementary to antecedent mobile elements and target invading nucleic acids. CRISPR clusters are transcribed and processed into CRISPR RNA (crRNA). Recognizes a short motif in the CRISPR repeat sequences (the 5' PAM or protospacer adjacent motif, TTTN in this organism) to help distinguish self versus nonself, as targets within the bacterial CRISPR locus do not have PAMs. Has dsDNA endonuclease activity, results in staggered 4-base 5' overhangs 19 and 22 bases downstream of the PAM on the non-targeted and targeted strand respectively. Non-target strand cleavage by the RuvC domain is probably a prerequisite of target strand cleavage by the Nuc domain. Protects E.coli against plasmids and bacteriophage M13mp18, phage T4 with hydroxymethyl or unmodified (but not glycosylated) cytosines and to a lesser extent against lambda and VpaE1 phage. In this CRISPR system correct processing of pre-crRNA requires only this protein and the CRISPR locus. This chain is CRISPR-associated endonuclease Cas12a, found in Acidaminococcus sp. (strain BV3L6).